Reading from the N-terminus, the 158-residue chain is Phosphopantetheine adenylyltransferase (158 aa).

Substrate is bound at residue Thr8. ATP contacts are provided by residues 8–9 (TF) and His16. Residues Lys40, Leu72, and Arg86 each contribute to the substrate site. Residues 87 to 89 (GLR), Glu97, and 122 to 128 (HAFISSS) contribute to the ATP site.

The protein belongs to the bacterial CoaD family. Homohexamer. Mg(2+) serves as cofactor.

It localises to the cytoplasm. It catalyses the reaction (R)-4'-phosphopantetheine + ATP + H(+) = 3'-dephospho-CoA + diphosphate. Its pathway is cofactor biosynthesis; coenzyme A biosynthesis; CoA from (R)-pantothenate: step 4/5. Reversibly transfers an adenylyl group from ATP to 4'-phosphopantetheine, yielding dephospho-CoA (dPCoA) and pyrophosphate. This chain is Phosphopantetheine adenylyltransferase, found in Campylobacter jejuni subsp. jejuni serotype O:6 (strain 81116 / NCTC 11828).